The following is a 78-amino-acid chain: Omega-conotoxin-like VnMKLT1-0111 (78 aa).

The first 22 residues, 1–22 (MKLTCMMIVAVLFLTAWTFVTA), serve as a signal peptide directing secretion. The propeptide occupies 23 to 48 (DSRNGLEYLFPKAHYEMNPEASKLNK). Disulfide bonds link Cys52–Cys69, Cys59–Cys73, and Cys68–Cys77.

Belongs to the conotoxin O1 superfamily. As to expression, expressed by the venom duct.

It localises to the secreted. In terms of biological role, omega-conotoxins act at presynaptic membranes, they bind and block voltage-gated calcium channels (Cav). This chain is Omega-conotoxin-like VnMKLT1-0111, found in Conus ventricosus (Mediterranean cone).